A 292-amino-acid polypeptide reads, in one-letter code: Histamine N-methyltransferase (292 aa).

E28 lines the substrate pocket. S-adenosyl-L-methionine contacts are provided by G60, E89, Q94, S120, and I142. Residue N283 participates in substrate binding.

The protein belongs to the class I-like SAM-binding methyltransferase superfamily. HNMT family. Monomer.

It localises to the cytoplasm. It carries out the reaction histamine + S-adenosyl-L-methionine = N(tau)-methylhistamine + S-adenosyl-L-homocysteine + H(+). Inactivates histamine by N-methylation. Plays an important role in degrading histamine and in regulating the airway response to histamine. This chain is Histamine N-methyltransferase (HNMT), found in Bos taurus (Bovine).